The primary structure comprises 171 residues: Large ribosomal subunit protein uL10 (171 aa).

Belongs to the universal ribosomal protein uL10 family. As to quaternary structure, part of the ribosomal stalk of the 50S ribosomal subunit. The N-terminus interacts with L11 and the large rRNA to form the base of the stalk. The C-terminus forms an elongated spine to which L12 dimers bind in a sequential fashion forming a multimeric L10(L12)X complex.

Its function is as follows. Forms part of the ribosomal stalk, playing a central role in the interaction of the ribosome with GTP-bound translation factors. This is Large ribosomal subunit protein uL10 from Corynebacterium glutamicum (strain ATCC 13032 / DSM 20300 / JCM 1318 / BCRC 11384 / CCUG 27702 / LMG 3730 / NBRC 12168 / NCIMB 10025 / NRRL B-2784 / 534).